The sequence spans 117 residues: Transcription elongation factor A protein-like 8 (117 aa).

2 stretches are compositionally biased toward basic and acidic residues: residues 1-24 and 61-74; these read MQKS…DRPL and YKED…DPEE. The tract at residues 1–74 is disordered; it reads MQKSCGENER…SPVRHLDPEE (74 aa). The stretch at 73–100 forms a coiled coil; the sequence is EEMIRGADELERLREEIRRVRNKFVMMH.

The protein belongs to the TFS-II family. TFA subfamily.

It is found in the nucleus. Its function is as follows. May be involved in transcriptional regulation. The protein is Transcription elongation factor A protein-like 8 (TCEAL8) of Bos taurus (Bovine).